A 321-amino-acid polypeptide reads, in one-letter code: Ribosomal protein L11 methyltransferase (321 aa).

S-adenosyl-L-methionine-binding residues include threonine 150, glycine 171, aspartate 193, and asparagine 256.

It belongs to the methyltransferase superfamily. PrmA family.

It localises to the cytoplasm. The enzyme catalyses L-lysyl-[protein] + 3 S-adenosyl-L-methionine = N(6),N(6),N(6)-trimethyl-L-lysyl-[protein] + 3 S-adenosyl-L-homocysteine + 3 H(+). In terms of biological role, methylates ribosomal protein L11. This is Ribosomal protein L11 methyltransferase from Herpetosiphon aurantiacus (strain ATCC 23779 / DSM 785 / 114-95).